We begin with the raw amino-acid sequence, 709 residues long: SH3 domain-containing kinase-binding protein 1 (709 aa).

SH3 domains are found at residues 1 to 58 (MVEA…EIKK) and 98 to 157 (RRRR…ELSG). Residues serine 156, serine 159, serine 227, and serine 274 each carry the phosphoserine modification. Positions 221–239 (ETTGSESDGGDSSSTKSEG) are enriched in low complexity. The interval 221–242 (ETTGSESDGGDSSSTKSEGANG) is disordered. Disordered regions lie at residues 289–309 (GKKL…MDSR), 372–485 (SDFD…KIDL), and 511–650 (DSVI…VSSQ). The residue at position 298 (threonine 298) is a Phosphothreonine. An SH3 3 domain is found at 311 to 372 (KTKDYCKVIF…PDNFVKLLPS (62 aa)). The span at 399–434 (TERKHEIKKIPPERPETLPNRTEEKERPEREPKLDL) shows a compositional bias: basic and acidic residues. Serine 480 is subject to Phosphoserine. A compositionally biased stretch (polar residues) spans 513–528 (VISSTEKLSHPTTSRP). Low complexity predominate over residues 535 to 554 (PPSQSLTSSSLSSPDIFDSP). A phosphoserine mark is found at serine 553, serine 555, and serine 565. Residues 561–575 (EEHISLAHRGIDVSK) show a composition bias toward basic and acidic residues. Polar residues predominate over residues 579 to 592 (KTVTISQVSDNKTS). Over residues 600-623 (MAAASSGPASLSSVASSPMSSSLG) the composition is skewed to low complexity. Positions 627-636 (QRASSPSLFS) are enriched in polar residues. Serine 631 is subject to Phosphoserine. Residues 646 to 708 (AVSSQAAIEE…VNDIKKALQS (63 aa)) adopt a coiled-coil conformation.

Can self-associate and form homotetramers. Interacts with CD2, F-actin capping protein, PIK3R3, GRB2, EGFR, MET, BLNK, MAP3K4, PDCD6IP, SPRY2, ARHGAP17, ARHGAP27, CRK, BCAR1, SOS1, ASAP1, ARAP3, HIP1R, SYNJ2, INPP5D and STAP1. Interacts with E3 ubiquitin-protein ligase CBL. Interacts with CBLB, but does not interact with CBLC. Two molecules of SH3KBP1 seem to bind through their respective SH3 1 domain to one molecule of CBLB. The interaction with CBL or CBLB and EGFR is increased upon EGF stimulation. The interaction with CBL is attenuated by PDCD6IP. Interacts (via SH3 domains) with ARAP1. The interaction is independent of EGF and does not affect ARAP1 GTPase-activating activity but is involved in regulating ubiquitination and endocytic trafficking of EGFR. ARAP1 competes with CBL for binding to SH3KBP1 and prevents interaction of CBL with SH3KBP1; this is likely to regulate SH3KBP1-mediated internalization of EGFR. Interacts through its proline-rich region with the SH3 domain of endophilins SH3GL1, SH3GL2 and SH3GL3. The SH3KBP1-endophilin complex seems to associate with a complex containing the phosphorylated receptor (EGFR or MET) and phosphorylated CBL. Probably associates with ASAP1 and phosphorylated EGFR. Probably part of a complex consisting of at least SH3KBP1, ASAP1 and ARAP3. Interacts with focal adhesion kinases PTK2/FAK1 and PTK2B/PYK2, probably as a dimer. Interacts with DAB2 and probably associates with chathrin through its interaction with DAB2. Part of a complex consisting of SH3KBP1, DAB2, and clathrin heavy chain. DAB2 and clathrin dissociate from SH3KBP1 following growth factor treatment, enabling interaction with CBL. Interacts with DDN and probably associates with MAGI2 through its interaction with DDN. Interacts with the SH3 domains of SRC tyrosine-protein kinases SRC, LCK, LYN, FGR, FYN and HCK. Interacts with TRADD, BIRC2, TRAF1, TRAF2 and TNFR1, and the association with a TNFR1-associated complex upon stimulation with TNF-alpha seems to be mediated by SRC. Probably part of a complex consisting of at least SH3KBP1, ASAP1 and ARAP3. Interacts (via SH3 domains) with SHKBP1 (via PXXXPR motifs). Interacts with ATX2. Interaction with CBL is abolished in the presence of SHKBP1. Interacts (via SH3 domains) with ZFP36 (via extreme C-terminal region). Interacts with MAP3K4; this interaction enhances the association with ZFP36. Monoubiquitinated by CBL and CBLB after EGF stimulation; probably on its C-terminus.

It localises to the cytoplasm. The protein localises to the cytoskeleton. The protein resides in the cytoplasmic vesicle membrane. It is found in the synapse. Its subcellular location is the synaptosome. It localises to the cell junction. The protein localises to the focal adhesion. Adapter protein involved in regulating diverse signal transduction pathways. Involved in the regulation of endocytosis and lysosomal degradation of ligand-induced receptor tyrosine kinases, including EGFR and MET/hepatocyte growth factor receptor, through an association with CBL and endophilins. The association with CBL, and thus the receptor internalization, may be inhibited by an interaction with PDCD6IP and/or SPRY2. Involved in regulation of ligand-dependent endocytosis of the IgE receptor. Attenuates phosphatidylinositol 3-kinase activity by interaction with its regulatory subunit. May be involved in regulation of cell adhesion; promotes the interaction between TTK2B and PDCD6IP. May be involved in the regulation of cellular stress response via the MAPK pathways through its interaction with MAP3K4. Is involved in modulation of tumor necrosis factor mediated apoptosis. Plays a role in the regulation of cell morphology and cytoskeletal organization. Required in the control of cell shape and migration. Has an essential role in the stimulation of B cell activation. The sequence is that of SH3 domain-containing kinase-binding protein 1 (Sh3kbp1) from Mus musculus (Mouse).